Consider the following 369-residue polypeptide: Anhydro-N-acetylmuramic acid kinase (369 aa).

ATP is bound at residue G12–D19.

It belongs to the anhydro-N-acetylmuramic acid kinase family.

The enzyme catalyses 1,6-anhydro-N-acetyl-beta-muramate + ATP + H2O = N-acetyl-D-muramate 6-phosphate + ADP + H(+). Its pathway is amino-sugar metabolism; 1,6-anhydro-N-acetylmuramate degradation. It participates in cell wall biogenesis; peptidoglycan recycling. Its function is as follows. Catalyzes the specific phosphorylation of 1,6-anhydro-N-acetylmuramic acid (anhMurNAc) with the simultaneous cleavage of the 1,6-anhydro ring, generating MurNAc-6-P. Is required for the utilization of anhMurNAc either imported from the medium or derived from its own cell wall murein, and thus plays a role in cell wall recycling. The protein is Anhydro-N-acetylmuramic acid kinase of Actinobacillus pleuropneumoniae serotype 5b (strain L20).